A 351-amino-acid polypeptide reads, in one-letter code: Protein Wnt-8b (351 aa).

Positions 1 to 22 are cleaved as a signal peptide; it reads MFLSKPSVYICLFTCVLQLSHS. Cysteine 54 and cysteine 65 are joined by a disulfide. Residue asparagine 103 is glycosylated (N-linked (GlcNAc...) asparagine). Intrachain disulfides connect cysteine 104–cysteine 112, cysteine 114–cysteine 132, cysteine 180–cysteine 194, cysteine 182–cysteine 189, cysteine 256–cysteine 294, cysteine 272–cysteine 287, cysteine 291–cysteine 333, cysteine 309–cysteine 324, cysteine 311–cysteine 321, and cysteine 316–cysteine 317. Serine 186 carries O-palmitoleoyl serine lipidation. A glycan (N-linked (GlcNAc...) asparagine) is linked at asparagine 259.

It belongs to the Wnt family. Post-translationally, palmitoleoylation is required for efficient binding to frizzled receptors. Depalmitoleoylation leads to Wnt signaling pathway inhibition. Proteolytic processing by TIKI1 and TIKI2 promotes oxidation and formation of large disulfide-bond oligomers, leading to inactivation of WNT8B. In terms of tissue distribution, expression is restricted to the brain, and more specifically to the forebrain.

Its subcellular location is the secreted. It is found in the extracellular space. The protein localises to the extracellular matrix. Functionally, ligand for members of the frizzled family of seven transmembrane receptors. May play an important role in the development and differentiation of certain forebrain structures, notably the hippocampus. The polypeptide is Protein Wnt-8b (WNT8B) (Homo sapiens (Human)).